Here is a 207-residue protein sequence, read N- to C-terminus: Large ribosomal subunit protein uL4 (207 aa).

A disordered region spans residues 54 to 76 (RSAVRGGGRKPWRQKGTGRARQG). The segment covering 60–71 (GGRKPWRQKGTG) has biased composition (basic residues).

It belongs to the universal ribosomal protein uL4 family. Part of the 50S ribosomal subunit.

Its function is as follows. One of the primary rRNA binding proteins, this protein initially binds near the 5'-end of the 23S rRNA. It is important during the early stages of 50S assembly. It makes multiple contacts with different domains of the 23S rRNA in the assembled 50S subunit and ribosome. Forms part of the polypeptide exit tunnel. The protein is Large ribosomal subunit protein uL4 of Staphylococcus haemolyticus (strain JCSC1435).